Consider the following 251-residue polypeptide: Large ribosomal subunit protein uL16m (251 aa).

Residues 1–29 (MWRLLTRAPAPLWRMHFSDTWAALPTSAG) constitute a mitochondrion transit peptide.

The protein belongs to the universal ribosomal protein uL16 family. In terms of assembly, component of the mitochondrial ribosome large subunit (39S) which comprises a 16S rRNA and about 50 distinct proteins.

It localises to the mitochondrion. The protein is Large ribosomal subunit protein uL16m (Mrpl16) of Rattus norvegicus (Rat).